Consider the following 134-residue polypeptide: Small ribosomal subunit protein uS9 (134 aa).

The disordered stretch occupies residues 109–134; sequence DARRTEPHKPSKSSKGPRARRQKSYR. Positions 118-134 are enriched in basic residues; the sequence is PSKSSKGPRARRQKSYR.

It belongs to the universal ribosomal protein uS9 family.

This is Small ribosomal subunit protein uS9 from Methanococcus vannielii (strain ATCC 35089 / DSM 1224 / JCM 13029 / OCM 148 / SB).